The sequence spans 281 residues: Hepatitis A virus cellular receptor 2 homolog (281 aa).

The signal sequence occupies residues 1-19 (MFSGLTLNCVLLLLQLLLA). Residues 20–125 (RSLENAYVFE…PGLMNDKKLE (106 aa)) form the Ig-like V-type domain. The Extracellular segment spans residues 20-193 (RSLENAYVFE…KDSGETIRTA (174 aa)). Intrachain disulfides connect Cys38/Cys111, Cys52/Cys63, and Cys58/Cys110. Positions 61 and 62 each coordinate a 1,2-diacyl-sn-glycero-3-phospho-L-serine. Residues Asn74 and Asn100 are each glycosylated (N-linked (GlcNAc...) asparagine). Arg112 lines the a 1,2-diacyl-sn-glycero-3-phospho-L-serine pocket. Positions 115 and 117 each coordinate Ca(2+). An a 1,2-diacyl-sn-glycero-3-phospho-L-serine-binding site is contributed by Met119. Asn120 serves as a coordination point for Ca(2+). Residues 139 to 160 (QTAHGDSTTASPRTLTTERNGS) are disordered. A glycan (O-linked (GalNAc...) threonine) is linked at Thr146. N-linked (GlcNAc...) asparagine glycosylation is present at Asn172. The helical transmembrane segment at 194 to 214 (IHIGVGVSAGLTLALIIGVLI) threads the bilayer. The Cytoplasmic portion of the chain corresponds to 215–281 (LKWYSCKKKK…YCYVNSQQPS (67 aa)). The segment at 252–270 (EENIYTIEENVYEVENSNE) is interaction with BAG6. Tyr256 bears the Phosphotyrosine; by ITK mark.

The protein belongs to the immunoglobulin superfamily. TIM family. As to quaternary structure, interacts with HMGB1; impairs HMGB1 binding to B-DNA and likely HMGB1-mediated innate immune response. Interacts with BAG6. Interacts (phosphorylated) with PIK3R1 and PIK3R2. Interacts (not dependent on its phosphorylation status) with FYN. Interacts (in basal state T-cells) with VAV1; AKT1/2, LCP2, ZAP70, SYK, PIK3R1, FYN, SH3BP2 and SH2D2A. Interacts (in activated T-cells) with LCK and PLCG. Interacts with ILF3; this interaction promotes ILF3 ubiquitination and degradation. Post-translationally, phosphorylated on tyrosine residues; modestly increased after TCR/CD28 stimulation. Can be phosphorylated in the cytoplasmic domain by FYN. Phosphorylation at Tyr-256 is increased by stimulation with ligand LGALS9. In terms of processing, N-glycosylated. As to expression, expressed in T-helper type 1 lymphocytes. Not expressed by naive T-cells but up-regulated as they differentiate into T-helper-1 cells. Also expressed by differentiated type 1 CD8+ cytotoxic T-cells. Expressed on peritoneal exudate macrophages, monocytes, and splenic dendritic cells (DCs). Expression on natural killer (NK) cells is inversely associated with IFN-gamma production during the initial 24 hours of LPS-induced endotoxic shock. Expressed on mast cells.

The protein resides in the membrane. It localises to the cell junction. It is found in the secreted. Functionally, cell surface receptor implicated in modulating innate and adaptive immune responses. Generally accepted to have an inhibiting function. Reports on stimulating functions suggest that the activity may be influenced by the cellular context and/or the respective ligand. Regulates macrophage activation. Inhibits T-helper type 1 lymphocyte (Th1)-mediated auto- and alloimmune responses and promotes immunological tolerance. In CD8+ cells attenuates TCR-induced signaling, specifically by blocking NF-kappaB and NFAT promoter activities resulting in the loss of IL-2 secretion. The function may implicate its association with LCK proposed to impair phosphorylation of TCR subunits. In contrast, shown to activate TCR-induced signaling in T-cells probably implicating ZAP70, LCP2, LCK and FYN. Expressed on Treg cells can inhibit Th17 cell responses. Receptor for LGALS9. Binding to LGALS9 is believed to result in suppression of T-cell responses; the resulting apoptosis of antigen-specific cells may implicate HAVCR2 phosphorylation and disruption of its association with BAG6. Binding to LGALS9 is proposed to be involved in innate immune response to intracellular pathogens. Expressed on Th1 cells interacts with LGALS9 expressed on Mycobacterium tuberculosis-infected macrophages to stimulate antibactericidal activity including IL-1 beta secretion and to restrict intracellular bacterial growth. However, the function as receptor for LGALS9 has been challenged. Also reported to enhance CD8+ T-cell responses to an acute infection such as by Listeria monocytogenes. Receptor for phosphatidylserine (PtSer); PtSer-binding is calcium-dependent. May recognize PtSer on apoptotic cells leading to their phagocytosis. Mediates the engulfment of apoptotic cells by dendritic cells. Expressed on T-cells, promotes conjugation but not engulfment of apoptotic cells. Expressed on dendritic cells (DCs) positively regulates innate immune response and in synergy with Toll-like receptors promotes secretion of TNF-alpha. In tumor-imfiltrating DCs suppresses nucleic acid-mediated innate immune repsonse by interaction with HMGB1 and interfering with nucleic acid-sensing and trafficking of nucleid acids to endosomes. Can enhance mast cell production of Th2 cytokines Il-4, IL-6 and IL-13. Expressed on natural killer (NK) cells acts as a coreceptor to enhance IFN-gamma production in response to LGALS9. In contrast, shown to suppress NK cell-mediated cytotoxicity. Negatively regulates NK cell function in LPS-induced endotoxic shock. This is Hepatitis A virus cellular receptor 2 homolog (Havcr2) from Mus musculus (Mouse).